The following is a 177-amino-acid chain: Large ribosomal subunit protein uL6 (177 aa).

The segment covering 152 to 171 has biased composition (basic and acidic residues); sequence RPPEPYKGKGVRYDDEEVRR. Residues 152–177 form a disordered region; that stretch reads RPPEPYKGKGVRYDDEEVRRKEAKKK.

The protein belongs to the universal ribosomal protein uL6 family. Part of the 50S ribosomal subunit.

Functionally, this protein binds to the 23S rRNA, and is important in its secondary structure. It is located near the subunit interface in the base of the L7/L12 stalk, and near the tRNA binding site of the peptidyltransferase center. The polypeptide is Large ribosomal subunit protein uL6 (Shewanella sp. (strain ANA-3)).